The sequence spans 888 residues: Alanine--tRNA ligase (888 aa).

Zn(2+) contacts are provided by histidine 571, histidine 575, cysteine 674, and histidine 678.

The protein belongs to the class-II aminoacyl-tRNA synthetase family. Zn(2+) serves as cofactor.

It is found in the cytoplasm. It carries out the reaction tRNA(Ala) + L-alanine + ATP = L-alanyl-tRNA(Ala) + AMP + diphosphate. Functionally, catalyzes the attachment of alanine to tRNA(Ala) in a two-step reaction: alanine is first activated by ATP to form Ala-AMP and then transferred to the acceptor end of tRNA(Ala). Also edits incorrectly charged Ser-tRNA(Ala) and Gly-tRNA(Ala) via its editing domain. The polypeptide is Alanine--tRNA ligase (Nocardia farcinica (strain IFM 10152)).